The primary structure comprises 480 residues: Cysteine--tRNA ligase (480 aa).

Cysteine 29 provides a ligand contact to Zn(2+). Residues 31 to 41 (PTVYSDPHLGH) carry the 'HIGH' region motif. 3 residues coordinate Zn(2+): cysteine 220, histidine 245, and glutamate 249. Residues 276 to 280 (KMAKS) carry the 'KMSKS' region motif. Lysine 279 contacts ATP.

Belongs to the class-I aminoacyl-tRNA synthetase family. Monomer. Requires Zn(2+) as cofactor.

It is found in the cytoplasm. The enzyme catalyses tRNA(Cys) + L-cysteine + ATP = L-cysteinyl-tRNA(Cys) + AMP + diphosphate. The chain is Cysteine--tRNA ligase from Thermus thermophilus (strain ATCC BAA-163 / DSM 7039 / HB27).